We begin with the raw amino-acid sequence, 287 residues long: Cell division protein ZipA (287 aa).

Residue Met1 is a topological domain, periplasmic. A helical transmembrane segment spans residues 2-22 (EIGLREWLIVIGIIVIAGILF). The Cytoplasmic portion of the chain corresponds to 23 to 287 (DGWRRMRGGK…FERRALTQKR (265 aa)). Positions 70–143 (LDEHDLPSMS…APRQSVNDQP (74 aa)) are disordered.

This sequence belongs to the ZipA family. Interacts with FtsZ via their C-terminal domains.

It is found in the cell inner membrane. In terms of biological role, essential cell division protein that stabilizes the FtsZ protofilaments by cross-linking them and that serves as a cytoplasmic membrane anchor for the Z ring. Also required for the recruitment to the septal ring of downstream cell division proteins. This is Cell division protein ZipA from Pseudomonas fluorescens (strain SBW25).